Consider the following 165-residue polypeptide: MIKSIWIAGGCFWGIQKYFDSIIGVNHTVVGYSQGNVINPSYEQVCTQTTNHTETVQIDYDDRFVSLISILEHLYQIIDPFSLNKQGDDVGSQYRSGIYYVDHDDEFIIKDFLLKKQNQTPKKIMIEVERLRNFNIAEEYHQKYLDKNPNSYCHVDLSLSKKEFR.

The active site involves Cys11.

It belongs to the MsrA Met sulfoxide reductase family.

The catalysed reaction is L-methionyl-[protein] + [thioredoxin]-disulfide + H2O = L-methionyl-(S)-S-oxide-[protein] + [thioredoxin]-dithiol. It catalyses the reaction [thioredoxin]-disulfide + L-methionine + H2O = L-methionine (S)-S-oxide + [thioredoxin]-dithiol. In terms of biological role, has an important function as a repair enzyme for proteins that have been inactivated by oxidation. Catalyzes the reversible oxidation-reduction of methionine sulfoxide in proteins to methionine. The polypeptide is Peptide methionine sulfoxide reductase MsrA (Ureaplasma parvum serovar 3 (strain ATCC 27815 / 27 / NCTC 11736)).